A 306-amino-acid polypeptide reads, in one-letter code: Elongation factor Ts (306 aa).

The interval 80–83 is involved in Mg(2+) ion dislocation from EF-Tu; that stretch reads TDFV.

This sequence belongs to the EF-Ts family.

Its subcellular location is the cytoplasm. Associates with the EF-Tu.GDP complex and induces the exchange of GDP to GTP. It remains bound to the aminoacyl-tRNA.EF-Tu.GTP complex up to the GTP hydrolysis stage on the ribosome. The polypeptide is Elongation factor Ts (Clostridium kluyveri (strain NBRC 12016)).